Here is a 313-residue protein sequence, read N- to C-terminus: MSVPQRLVIATRASRLALWQAEHVRDRLRALYPACAVELLTLTTRGDQILDRTLSKVGGKGLFVKELETALLDGRADLAVHSLKDVPVDLQAPFELCAILERADPRDAFVSNQYTTLADLPAGAVVGTSSLRRESQIRQRYPHLSVKPLRGNLDTRLSKLDRGDYAAIVLAAAGLQRLGMGERIRSLLEPEDSLPAAGQGALGIEIRNDRNDLREWLAPLACSRTTACVVAERAVSRALGGSCQVPLAAYAELNGNSLALRALVASPDGTRVIRSQHAGPAEQAQAIGQAAAQELLSNGADAILAELQDPPAS.

Cysteine 243 is subject to S-(dipyrrolylmethanemethyl)cysteine.

The protein belongs to the HMBS family. As to quaternary structure, monomer. It depends on dipyrromethane as a cofactor.

The catalysed reaction is 4 porphobilinogen + H2O = hydroxymethylbilane + 4 NH4(+). It functions in the pathway porphyrin-containing compound metabolism; protoporphyrin-IX biosynthesis; coproporphyrinogen-III from 5-aminolevulinate: step 2/4. Tetrapolymerization of the monopyrrole PBG into the hydroxymethylbilane pre-uroporphyrinogen in several discrete steps. The chain is Porphobilinogen deaminase from Bordetella petrii (strain ATCC BAA-461 / DSM 12804 / CCUG 43448).